The following is a 501-amino-acid chain: Flagellin (501 aa).

Belongs to the bacterial flagellin family.

It localises to the secreted. It is found in the bacterial flagellum. In terms of biological role, flagellin is the subunit protein which polymerizes to form the filaments of bacterial flagella. This chain is Flagellin (flaA), found in Aquifex pyrophilus.